The primary structure comprises 424 residues: Histidine--tRNA ligase (424 aa).

Belongs to the class-II aminoacyl-tRNA synthetase family. As to quaternary structure, homodimer.

The protein localises to the cytoplasm. It catalyses the reaction tRNA(His) + L-histidine + ATP = L-histidyl-tRNA(His) + AMP + diphosphate + H(+). The polypeptide is Histidine--tRNA ligase (Shigella boydii serotype 18 (strain CDC 3083-94 / BS512)).